The following is an 854-amino-acid chain: MDNNQNNFNQPGQQGFDQYQQQSGALVSYGYDANGNPVSDPSLAVYDANGMLINQNQYDQNQQQEYDQYGNPVGMLSGNVYSQENDPYYQQYNQQQNQGYEQQYDEYGNPIGLLPGSENQQNNQQQYDQYGNPIGMLPGGTNDQAYDPNQMQYDQYGNPVGMLAGVNANDQGYDYNQMQYDEYGNPVGMLPGGNANDQGYDYNQMQYDEYGNPPALYDNNQQDYYGYDQNQQYDQANNQLAVVDENYEQEQQVESNEEPAHEQDLREFLNNNSDTELVSYYEEEEDEKKPRNKKKQRQTAQARGLLPELATVNQPDQTPITPHLEAPVHYDENEELSTDDLSDDINLDQNQAVHHDAEDDVINIPIEDIESALLPKFEEIQRHNLEEIQKVKLEAAENFKVLQRANEELKSSNNELKTTNQQLKTSNEALEDSNKRIESQLQALLDSINDIKSKNNQPSQEEVDSRSKLEQRLEELAYKLDQTKEIIDETSESSRESFQQSKDQLIENFEKKIELLTEKLNQTQESFNQSQEAKQQQDKEFAQKIERIIEQTKEANDSLQNRVKESSLDMESKLENKFESFADKLTEITSKKISEKMTEQQASKKEEIDSLQSSFQKALSEVVSKVENYANQSQLQSQHLNQTLSYHQQQINNSLRQSAQMAQMAQMQHMMPQQMLMGMNNPYGFNHHTMMPPVHQYQQLPPPPPVQAPAQQLLPTINNPLQLPNENPTLFEKLMLANMFKQTINPPQPQPQALPQPHPQPQQLPPQILALPPTVVQQPNYLVPQPPRQPDYYSNRLNERMMLDDAYNAGYDEAVYELENQYYPPAYEYPEYEEIQPSFRRRGGRAKFDPYNNR.

Residues 1–24 (MDNNQNNFNQPGQQGFDQYQQQSG) are compositionally biased toward low complexity. Residues 1–33 (MDNNQNNFNQPGQQGFDQYQQQSGALVSYGYDA) form a disordered region. The fibronectin-binding stretch occupies residues 91 to 109 (QYNQQQNQGYEQQYDEYGN). Disordered stretches follow at residues 247–327 (YEQE…LEAP), 411–434 (SSNNELKTTNQQLKTSNEALEDSN), 743–766 (TINPPQPQPQALPQPHPQPQQLPP), and 835–854 (IQPSFRRRGGRAKFDPYNNR). The segment covering 258-267 (EPAHEQDLRE) has biased composition (basic and acidic residues). 2 stretches are compositionally biased toward polar residues: residues 311 to 320 (TVNQPDQTPI) and 411 to 428 (SSNNELKTTNQQLKTSNE). Residues 384-622 (NLEEIQKVKL…SSFQKALSEV (239 aa)) are a coiled coil. Pro residues predominate over residues 746–764 (PPQPQPQALPQPHPQPQQL).

Its subcellular location is the cell membrane. Functionally, binds immobilized fibronectin, specifically the gelatin/heparin-binding domain. This chain is Fibronectin-binding protein PlpA (plpA), found in Mycoplasmoides gallisepticum (strain R(low / passage 15 / clone 2)) (Mycoplasma gallisepticum).